We begin with the raw amino-acid sequence, 312 residues long: Acetylglutamate kinase (312 aa).

Substrate is bound by residues 76-77, Arg-98, and Asn-199; that span reads GG.

Belongs to the acetylglutamate kinase family. ArgB subfamily.

It localises to the cytoplasm. The enzyme catalyses N-acetyl-L-glutamate + ATP = N-acetyl-L-glutamyl 5-phosphate + ADP. It functions in the pathway amino-acid biosynthesis; L-arginine biosynthesis; N(2)-acetyl-L-ornithine from L-glutamate: step 2/4. In terms of biological role, catalyzes the ATP-dependent phosphorylation of N-acetyl-L-glutamate. The polypeptide is Acetylglutamate kinase (Beutenbergia cavernae (strain ATCC BAA-8 / DSM 12333 / CCUG 43141 / JCM 11478 / NBRC 16432 / NCIMB 13614 / HKI 0122)).